The sequence spans 223 residues: Probable 3-beta-hydroxysteroid-Delta(8),Delta(7)-isomerase (223 aa).

Helical transmembrane passes span 28–48, 58–78, 115–135, and 175–195; these read IVSI…LLFG, LMCW…YFVF, VEGI…YAIA, and FYYY…PSLI. One can recognise an EXPERA domain in the interval 54–196; that stretch reads LDKLLMCWWT…WWVLIPSLIS (143 aa).

The protein belongs to the EBP family.

It localises to the endoplasmic reticulum membrane. It carries out the reaction lathosterol = 5alpha-cholest-8-en-3beta-ol. Its pathway is steroid biosynthesis; sterol biosynthesis. Its function is as follows. Catalyzes the conversion of Delta(8)-sterols to their corresponding Delta(7)-isomers. This chain is Probable 3-beta-hydroxysteroid-Delta(8),Delta(7)-isomerase, found in Arabidopsis thaliana (Mouse-ear cress).